A 727-amino-acid polypeptide reads, in one-letter code: Elongation factor 2 (727 aa).

The tr-type G domain maps to 19–260 (DQIRNIGICA…MVVTHLPNPV (242 aa)). Residues 28-35 (AHIDHGKT), 94-98 (DTPGH), and 148-151 (NKVD) contribute to the GTP site. At His-603 the chain carries Diphthamide.

It belongs to the TRAFAC class translation factor GTPase superfamily. Classic translation factor GTPase family. EF-G/EF-2 subfamily.

It is found in the cytoplasm. Catalyzes the GTP-dependent ribosomal translocation step during translation elongation. During this step, the ribosome changes from the pre-translocational (PRE) to the post-translocational (POST) state as the newly formed A-site-bound peptidyl-tRNA and P-site-bound deacylated tRNA move to the P and E sites, respectively. Catalyzes the coordinated movement of the two tRNA molecules, the mRNA and conformational changes in the ribosome. This Methanococcus aeolicus (strain ATCC BAA-1280 / DSM 17508 / OCM 812 / Nankai-3) protein is Elongation factor 2.